Here is a 427-residue protein sequence, read N- to C-terminus: Adenylosuccinate synthetase (427 aa).

GTP-binding positions include 12–18 and 40–42; these read GDEGKGK and GHT. The active-site Proton acceptor is the Asp13. Asp13 and Gly40 together coordinate Mg(2+). Residues 13–16, 38–41, Thr128, Arg142, Gln223, Thr238, and Arg302 each bind IMP; these read DEGK and NAGH. His41 functions as the Proton donor in the catalytic mechanism. 298-304 is a substrate binding site; it reads VTTGRDR. GTP contacts are provided by residues Arg304, 330 to 332, and 412 to 414; these read KLD and GVG.

Belongs to the adenylosuccinate synthetase family. As to quaternary structure, homodimer. Mg(2+) is required as a cofactor.

Its subcellular location is the cytoplasm. It carries out the reaction IMP + L-aspartate + GTP = N(6)-(1,2-dicarboxyethyl)-AMP + GDP + phosphate + 2 H(+). Its pathway is purine metabolism; AMP biosynthesis via de novo pathway; AMP from IMP: step 1/2. Plays an important role in the de novo pathway of purine nucleotide biosynthesis. Catalyzes the first committed step in the biosynthesis of AMP from IMP. The polypeptide is Adenylosuccinate synthetase (Streptomyces coelicolor (strain ATCC BAA-471 / A3(2) / M145)).